The chain runs to 84 residues: Beta-mammal/insect toxin Ts1 (84 aa).

An N-terminal signal peptide occupies residues 1–20 (MKGMILFISCLLLIGIVVEC). An LCN-type CS-alpha/beta domain is found at 21–82 (KEGYLMDHEG…VWDRATNKCG (62 aa)). 4 disulfides stabilise this stretch: Cys31-Cys81, Cys35-Cys57, Cys43-Cys62, and Cys47-Cys64. Position 81 is a cysteine amide (Cys81).

The protein belongs to the long (4 C-C) scorpion toxin superfamily. Sodium channel inhibitor family. In terms of processing, C-terminal amidation is important for high activity. In terms of tissue distribution, expressed by the venom gland.

It localises to the secreted. Its function is as follows. Voltage-gated sodium channels (Nav) gating-modifier. Acts both as alpha- and beta-toxin, since it affects not only activation but also inactivation of Nav channels. Binds to Nav domain DII and impairs the four Nav channel voltage sensors movements. Depending on Nav channel subtypes tested, can also bind Nav domains DIII (low affinity) and DIV (very low affinity). Acts on almost all the Nav channels tested (mammalian Nav1.2/SCN2A, Nav1.3/SCN3A, Nav1.4/SCN4A, Nav1.5/SCN5A, Nav1.6/SCN8A, Nav1.9/SCN11A, and insect DmNav1). Is highly active against both mammals and insects. Irreversibly modulates DmNav channels. Other Ts1 activities have been studied, such as immunomodulation, antimicrobial activity or exocrine secretion. This toxin exhibits an antifungal activity against filamentous fungi. In vitro, it has an important immunomodulatory effect on macrophages by stimulating the release of pro-inflammatory cytokines. It also shows an activity in exocrine secretion in pancreas, stomach and adrenal gland. This is Beta-mammal/insect toxin Ts1 from Tityus serrulatus (Brazilian scorpion).